Reading from the N-terminus, the 245-residue chain is Thiopurine S-methyltransferase (245 aa).

S14 carries the post-translational modification Phosphoserine. Residue 29–40 participates in S-adenosyl-L-methionine binding; it reads WQDKWVNGKTAF. A substrate-binding site is contributed by F40. K58 bears the N6-acetyllysine mark. S-adenosyl-L-methionine is bound by residues L69, E90, 134 to 135, and R152; that span reads SI.

Belongs to the class I-like SAM-binding methyltransferase superfamily. TPMT family. Monomer.

The protein localises to the cytoplasm. It carries out the reaction S-adenosyl-L-methionine + a thiopurine = S-adenosyl-L-homocysteine + a thiopurine S-methylether.. The polypeptide is Thiopurine S-methyltransferase (TPMT) (Gorilla gorilla gorilla (Western lowland gorilla)).